We begin with the raw amino-acid sequence, 89 residues long: Barrier-to-autointegration factor (89 aa).

Met1 is subject to N-acetylmethionine. Thr2 is subject to N-acetylthreonine; in Barrier-to-autointegration factor, N-terminally processed. 2 positions are modified to phosphothreonine; by VRK1 and VRK2: Thr2 and Thr3. A Phosphoserine; by VRK1 and VRK2 modification is found at Ser4. A HhH domain is found at 20–35; that stretch reads VGSLAGIGEVLGKKLE.

The protein belongs to the BAF family. In terms of assembly, homodimer. Heterodimerizes with BANF2. Interacts with ANKLE2/LEM4, leading to decreased phosphorylation by VRK1 and promoting dephosphorylation by protein phosphatase 2A (PP2A). Binds non-specifically to double-stranded DNA, and is found as a hexamer or dodecamer upon DNA binding. Binds to LEM domain-containing nuclear proteins such as LEMD3/MAN1, TMPO/LAP2 and EMD (emerin). Interacts with ANKLE1 (via LEM domain); the interaction may favor BANF1 dimerization. Interacts with CRX and LMNA (lamin-A). Binds linker histone H1.1 and core histones H3. Interacts with LEMD2 (via LEM domain). Interacts with PARP1; interaction takes place in response to oxidative DNA damage. Post-translationally, ser-4 is the major site of phosphorylation as compared to Thr-2 and Thr-3. Phosphorylation on Thr-2; Thr-3 and Ser-4 disrupts its ability to bind DNA and reduces its ability to bind LEM domain-containing proteins. Non phosphorylated BAF seems to enhance binding between EMD and LMNA. Dephosphorylated by protein phosphatase 2A (PP2A) following interaction with ANKLE2/LEM4 during mitotic exit, leading to mitotic nuclear envelope reassembly.

The protein resides in the nucleus. It is found in the chromosome. It localises to the nucleus envelope. The protein localises to the cytoplasm. Its function is as follows. Non-specific DNA-binding protein that plays key roles in mitotic nuclear reassembly, chromatin organization, DNA damage response, gene expression and intrinsic immunity against foreign DNA. Contains two non-specific double-stranded DNA (dsDNA)-binding sites which promote DNA cross-bridging. Plays a key role in nuclear membrane reformation at the end of mitosis by driving formation of a single nucleus in a spindle-independent manner. Transiently cross-bridges anaphase chromosomes via its ability to bridge distant DNA sites, leading to the formation of a dense chromatin network at the chromosome ensemble surface that limits membranes to the surface. Also acts as a negative regulator of innate immune activation by restricting CGAS activity toward self-DNA upon acute loss of nuclear membrane integrity. Outcompetes CGAS for DNA-binding, thereby preventing CGAS activation and subsequent damaging autoinflammatory responses. Also involved in DNA damage response: interacts with PARP1 in response to oxidative stress, thereby inhibiting the ADP-ribosyltransferase activity of PARP1. Involved in the recognition of exogenous dsDNA in the cytosol: associates with exogenous dsDNA immediately after its appearance in the cytosol at endosome breakdown and is required to avoid autophagy. In case of poxvirus infection, has an antiviral activity by blocking viral DNA replication. The protein is Barrier-to-autointegration factor (BANF1) of Bos taurus (Bovine).